We begin with the raw amino-acid sequence, 430 residues long: Transcriptional regulatory protein RXT2 (430 aa).

Positions 408–430 are disordered; that stretch reads EIENTMEDGVVDDNEPDEEANRA.

Belongs to the RXT2 family. In terms of assembly, component of the RPD3C(L) complex composed of at least ASH1, CTI6, DEP1, PHO23, RPD3, RXT2, RXT3, SAP30, SDS3, SIN3, UME1 and UME6.

It localises to the nucleus. Component of the RPD3C(L) histone deacetylase complex (HDAC) responsible for the deacetylation of lysine residues on the N-terminal part of the core histones (H2A, H2B, H3 and H4). Histone deacetylation gives a tag for epigenetic repression and plays an important role in transcriptional regulation, cell cycle progression and developmental events. The chain is Transcriptional regulatory protein RXT2 (RXT2) from Saccharomyces cerevisiae (strain ATCC 204508 / S288c) (Baker's yeast).